The chain runs to 301 residues: Ribosomal RNA small subunit methyltransferase A (301 aa).

The S-adenosyl-L-methionine site is built by Asn-29, Leu-31, Gly-56, Glu-77, Asp-102, and Asn-127.

Belongs to the class I-like SAM-binding methyltransferase superfamily. rRNA adenine N(6)-methyltransferase family. RsmA subfamily.

Its subcellular location is the cytoplasm. It catalyses the reaction adenosine(1518)/adenosine(1519) in 16S rRNA + 4 S-adenosyl-L-methionine = N(6)-dimethyladenosine(1518)/N(6)-dimethyladenosine(1519) in 16S rRNA + 4 S-adenosyl-L-homocysteine + 4 H(+). Functionally, specifically dimethylates two adjacent adenosines (A1518 and A1519) in the loop of a conserved hairpin near the 3'-end of 16S rRNA in the 30S particle. May play a critical role in biogenesis of 30S subunits. The protein is Ribosomal RNA small subunit methyltransferase A of Halothermothrix orenii (strain H 168 / OCM 544 / DSM 9562).